A 216-amino-acid polypeptide reads, in one-letter code: MVRVKICGITRPEDAATADEAGTDAVGCVVEVPVSTPRKVSAEHANEVFSVVSPFVSRVAVLMDNLEPIDRLEEATAVQLHGTEDPETCEELSELGLDVIKTFWVDQRGSVWLGEELIGDEVLAEYCEIVDAVLLDTKSAEGGGSGERHDWDASARLVRRLDVPVILAGGLNPENVREAVEKVRPYAVDTSSGVEKEPGIKDPEAIAEFVRATKSV.

It belongs to the TrpF family.

It carries out the reaction N-(5-phospho-beta-D-ribosyl)anthranilate = 1-(2-carboxyphenylamino)-1-deoxy-D-ribulose 5-phosphate. It functions in the pathway amino-acid biosynthesis; L-tryptophan biosynthesis; L-tryptophan from chorismate: step 3/5. This chain is N-(5'-phosphoribosyl)anthranilate isomerase, found in Methanopyrus kandleri (strain AV19 / DSM 6324 / JCM 9639 / NBRC 100938).